The sequence spans 281 residues: D-arabinitol 2-dehydrogenase [ribulose-forming] (281 aa).

Residues Leu-31 and Asn-52 each coordinate NADP(+). The active-site Proton donor is the Ser-169. NADP(+) is bound by residues Tyr-184, Lys-188, Ile-217, and Thr-219. The active-site Proton acceptor is the Tyr-184. Lys-188 acts as the Lowers pKa of active site Tyr in catalysis.

This sequence belongs to the short-chain dehydrogenases/reductases (SDR) family.

The enzyme catalyses D-arabinitol + NAD(+) = D-ribulose + NADH + H(+). The protein operates within carbohydrate metabolism; D-arabinitol metabolism. This is D-arabinitol 2-dehydrogenase [ribulose-forming] (ARD1) from Candida albicans (strain WO-1) (Yeast).